The sequence spans 368 residues: DNA integrity scanning protein DisA (368 aa).

A DAC domain is found at 15–153 (DERLRATLAA…DGRRHVLDEP (139 aa)). ATP-binding positions include Gly-82, Leu-100, and 113–117 (TRHRS). The segment at 101–121 (QPDPSIPTNESGTRHRSAERT) is disordered. Positions 112 to 121 (GTRHRSAERT) are enriched in basic and acidic residues.

The protein belongs to the DisA family. In terms of assembly, homooctamer. Mg(2+) serves as cofactor.

The enzyme catalyses 2 ATP = 3',3'-c-di-AMP + 2 diphosphate. In terms of biological role, participates in a DNA-damage check-point. DisA forms globular foci that rapidly scan along the chromosomes searching for lesions. Also has diadenylate cyclase activity, catalyzing the condensation of 2 ATP molecules into cyclic di-AMP (c-di-AMP). c-di-AMP likely acts as a signaling molecule that may couple DNA integrity with a cellular process. The sequence is that of DNA integrity scanning protein DisA from Acidothermus cellulolyticus (strain ATCC 43068 / DSM 8971 / 11B).